A 727-amino-acid chain; its full sequence is MTVSENSVLETEVLVGGSAMPNERPGAMEPQSLTEMPEGFPRRSTVANGVRSRSSRRFFVVGGALLLSSFAIYEMGAVFSIGGITPLEYLVLLLFAINFCWIALAFCSGIAGFLILLRKPKAKDLEVTELHTRTAILMPTYNESPDRVFSAVSVMAEALSQTGHGHAFDWFILSDTTDPEIALLEEQAFLVLRQETHKHSRVYYRRRRKNVARKAGNVADFCRRWGSRYDHLLVLDADSLMESSTITGLAQRMQADPDAGLIQTIPSLINGTTLMARLQQFAARIYGPVIGTGLGWWVQKEGNFWGHNAIIRTEAFMGAAGLPNLKGKPPFGGHILSHDFVEAALIRRAGWSVVIAYDLPGSYEECPPSIVDLAVRDRRWCQGNLQHSRILPTKGLHWVSRLHLLTGIMAYLSSPFWLLLILTGLMLALQAHFIRPEYFTDQFSLFPTWPIMDSDRALRLFYITMGVLFGPKIFGVLLLLKDGQFARSVGGRIKAIFSVLFEVVLSALIAPIMMFIHCGAVMSILMGRDSGWSPQRRDDGSMPWLTLIYRHRWHMLAGVMLGYAAILDSLTLLAWMSPALIGLWFAVPISAWTGSVKIGEVFKRAGILATPEERSPAAICLQAQDARAAYQAHISKPWTLAQLLKDPALMELHLAMVDKQPLRAAGTPIEPVEAIVHVKVHEAQCQESAMALFNRQEMALVLANPLMLRSLQKLPEQFVAEDLVSFC.

A disordered region spans residues 18–45; sequence SAMPNERPGAMEPQSLTEMPEGFPRRST. 7 helical membrane passes run 58–78, 90–110, 278–298, 408–428, 460–480, 496–516, and 572–592; these read FFVV…MGAV, LVLL…CSGI, LQQF…GWWV, IMAY…LMLA, LFYI…LLLL, IFSV…MMFI, and LLAW…ISAW.

The protein belongs to the glycosyltransferase 2 family. OpgH subfamily.

The protein localises to the cell inner membrane. Its pathway is glycan metabolism; osmoregulated periplasmic glucan (OPG) biosynthesis. Functionally, involved in the biosynthesis of osmoregulated periplasmic glucans (OPGs). The chain is Glucans biosynthesis glucosyltransferase H from Shewanella putrefaciens (strain CN-32 / ATCC BAA-453).